A 638-amino-acid polypeptide reads, in one-letter code: Adhesion G-protein coupled receptor F2 (638 aa).

The first 25 residues, 1–25, serve as a signal peptide directing secretion; that stretch reads MISARWLYCLVLLLATESCRLFCQA. The Extracellular segment spans residues 26–386; it reads ASKSKENVMP…ESPVLTYITY (361 aa). N-linked (GlcNAc...) asparagine glycans are attached at residues N155, N219, N248, N293, and N311. Residues 233 to 377 form the GAIN-B domain; the sequence is PRNSLGKNFT…SILMSPNTVE (145 aa). Intrachain disulfides connect C329-C356 and C344-C358. The segment at 329–377 is GPS; the sequence is CVGWHSLESRWDRRACKMIQENSRQAICRCQPNKFFTSFSILMSPNTVE. A helical transmembrane segment spans residues 387-407; it reads IGLGISICSLIICLAIEALVW. Residues 408-422 lie on the Cytoplasmic side of the membrane; the sequence is SQVTKTEISYLRHLC. A helical membrane pass occupies residues 423–443; the sequence is IANIAVTLLMADVWFIVASFL. Residues 444-465 lie on the Extracellular side of the membrane; sequence SGPIVHHNGCVTATFFVHFFYL. A helical membrane pass occupies residues 466–486; it reads SVFFWMLAKALLILYGILIVF. The Cytoplasmic segment spans residues 487-493; the sequence is HTLPKSC. A helical transmembrane segment spans residues 494–514; sequence LVASLFTVGYGCPLVIAVITL. Over 515–541 the chain is Extracellular; that stretch reads AVTEPGKGYLRPEACWLNWDMTKALLA. The chain crosses the membrane as a helical span at residues 542-562; sequence FVVPALAIVVVNLITVTLVII. The Cytoplasmic segment spans residues 563–586; sequence KTQRAAVGSSMFQEVRAIVRICKN. A helical transmembrane segment spans residues 587–607; it reads IAILTPLLGLTWGFGIATVVA. At 608–610 the chain is on the extracellular side; that stretch reads GHS. The helical transmembrane segment at 611-631 threads the bilayer; it reads LAFHIIFSLLNALQVSPDAMI. Residues 632 to 638 lie on the Cytoplasmic side of the membrane; sequence ESEWRGC.

It belongs to the G-protein coupled receptor 2 family. Adhesion G-protein coupled receptor (ADGR) subfamily.

Its subcellular location is the membrane. Orphan receptor. This chain is Adhesion G-protein coupled receptor F2 (Adgrf2), found in Rattus norvegicus (Rat).